The sequence spans 441 residues: Ribosomal protein uS12 methylthiotransferase RimO (441 aa).

One can recognise an MTTase N-terminal domain in the interval 8-118 (PKIGFVSLGC…VLEHVHHYVP (111 aa)). Residues C17, C53, C82, C150, C154, and C157 each coordinate [4Fe-4S] cluster. A Radical SAM core domain is found at 136 to 373 (LTPRHYAYLK…MQLQQQISAE (238 aa)). A TRAM domain is found at 376 to 441 (QEKVGREILV…DEYDLWGSRV (66 aa)).

Belongs to the methylthiotransferase family. RimO subfamily. It depends on [4Fe-4S] cluster as a cofactor.

It is found in the cytoplasm. The catalysed reaction is L-aspartate(89)-[ribosomal protein uS12]-hydrogen + (sulfur carrier)-SH + AH2 + 2 S-adenosyl-L-methionine = 3-methylsulfanyl-L-aspartate(89)-[ribosomal protein uS12]-hydrogen + (sulfur carrier)-H + 5'-deoxyadenosine + L-methionine + A + S-adenosyl-L-homocysteine + 2 H(+). In terms of biological role, catalyzes the methylthiolation of an aspartic acid residue of ribosomal protein uS12. In Shigella boydii serotype 18 (strain CDC 3083-94 / BS512), this protein is Ribosomal protein uS12 methylthiotransferase RimO.